Consider the following 205-residue polypeptide: Guanylate kinase (205 aa).

The Guanylate kinase-like domain occupies 6-185 (GLLIVLSRPS…ACDRIKAIVV (180 aa)). 13 to 20 (RPSGVGKG) is a binding site for ATP.

It belongs to the guanylate kinase family.

It localises to the cytoplasm. It catalyses the reaction GMP + ATP = GDP + ADP. Essential for recycling GMP and indirectly, cGMP. The chain is Guanylate kinase from Bacillus cereus (strain ATCC 14579 / DSM 31 / CCUG 7414 / JCM 2152 / NBRC 15305 / NCIMB 9373 / NCTC 2599 / NRRL B-3711).